A 125-amino-acid chain; its full sequence is Small ribosomal subunit protein uS11m (125 aa).

It belongs to the universal ribosomal protein uS11 family.

The protein resides in the mitochondrion. This Marchantia polymorpha (Common liverwort) protein is Small ribosomal subunit protein uS11m (RPS11).